Here is a 721-residue protein sequence, read N- to C-terminus: Choline O-acetyltransferase (721 aa).

Histidine 419 serves as the catalytic Proton acceptor. Residues 496–508 (GKTF…VSPD), serine 534, and glutamine 656 each bind CoA.

The protein belongs to the carnitine/choline acetyltransferase family. In terms of assembly, the 54 kDa and 13 kDa chains exist as a heterodimer. The N-terminus of choline O-acetyltransferase 67 kDa and 54 kDa chains are blocked.

It catalyses the reaction choline + acetyl-CoA = acetylcholine + CoA. Catalyzes the reversible synthesis of acetylcholine (ACh) from acetyl CoA and choline at cholinergic synapses. The polypeptide is Choline O-acetyltransferase (Drosophila melanogaster (Fruit fly)).